The sequence spans 153 residues: Ribosomal RNA large subunit methyltransferase H (153 aa).

S-adenosyl-L-methionine is bound by residues leucine 70, glycine 102, and 121–126; that span reads LSRMTF.

It belongs to the RNA methyltransferase RlmH family. In terms of assembly, homodimer.

Its subcellular location is the cytoplasm. The enzyme catalyses pseudouridine(1915) in 23S rRNA + S-adenosyl-L-methionine = N(3)-methylpseudouridine(1915) in 23S rRNA + S-adenosyl-L-homocysteine + H(+). Specifically methylates the pseudouridine at position 1915 (m3Psi1915) in 23S rRNA. In Geobacter sulfurreducens (strain ATCC 51573 / DSM 12127 / PCA), this protein is Ribosomal RNA large subunit methyltransferase H.